A 777-amino-acid polypeptide reads, in one-letter code: Endonuclease MutS2 (777 aa).

328–335 (GPNTGGKT) provides a ligand contact to ATP. The Smr domain occupies 702 to 777 (LDLRGKRYEE…GSGATIVIFK (76 aa)).

This sequence belongs to the DNA mismatch repair MutS family. MutS2 subfamily. Homodimer. Binds to stalled ribosomes, contacting rRNA.

Its function is as follows. Endonuclease that is involved in the suppression of homologous recombination and thus may have a key role in the control of bacterial genetic diversity. Functionally, acts as a ribosome collision sensor, splitting the ribosome into its 2 subunits. Detects stalled/collided 70S ribosomes which it binds and splits by an ATP-hydrolysis driven conformational change. Acts upstream of the ribosome quality control system (RQC), a ribosome-associated complex that mediates the extraction of incompletely synthesized nascent chains from stalled ribosomes and their subsequent degradation. Probably generates substrates for RQC. The protein is Endonuclease MutS2 of Streptococcus sanguinis (strain SK36).